We begin with the raw amino-acid sequence, 779 residues long: 3-isopropylmalate dehydratase (779 aa).

Positions 360, 421, and 424 each coordinate [4Fe-4S] cluster. The segment at 484–518 is disordered; sequence QDQSSPKVEVTSEDEKELESAAYDHAEPVQPEDAP. Ser-488 is modified (phosphoserine). The residue at position 494 (Thr-494) is a Phosphothreonine. Residue Ser-495 is modified to Phosphoserine. Over residues 501-510 the composition is skewed to basic and acidic residues; the sequence is LESAAYDHAE.

The protein belongs to the aconitase/IPM isomerase family. As to quaternary structure, monomer. Requires [4Fe-4S] cluster as cofactor.

The enzyme catalyses (2R,3S)-3-isopropylmalate = (2S)-2-isopropylmalate. Its pathway is amino-acid biosynthesis; L-leucine biosynthesis; L-leucine from 3-methyl-2-oxobutanoate: step 2/4. Catalyzes the isomerization between 2-isopropylmalate and 3-isopropylmalate, via the formation of 2-isopropylmaleate. The protein is 3-isopropylmalate dehydratase (LEU1) of Saccharomyces cerevisiae (strain ATCC 204508 / S288c) (Baker's yeast).